Reading from the N-terminus, the 213-residue chain is High frequency lysogenization protein HflD (213 aa).

A coiled-coil region spans residues 99 to 126 (LSSAKGALDTLGNRINGLQRQLEHFDLQ).

This sequence belongs to the HflD family. As to quaternary structure, interacts with CII protein from phage lambda.

It is found in the cytoplasm. Its subcellular location is the cell inner membrane. Functionally, negative regulator of phage lambda lysogenization. Contributes to the degradation of the phage regulatory protein CII. Acts probably by holding CII on the membrane surface, away from the target promoters, but close to the FtsH protease. The chain is High frequency lysogenization protein HflD from Escherichia coli O157:H7.